We begin with the raw amino-acid sequence, 252 residues long: MAESKLVIGDRSFASRLIMGTGGATNLAVLEQALIASGTELTTVAIRRVDADGGTGLLDLLNRLGITPLPNTAGSRSAAEAVLTAQLAREALNTNWVKLEVIADERTLWPDAVELVRAAEQLVDDGFVVLPYTTDDPVLARRLEDTGCAAVMPLGSPIGTGLGIANPHNIEMIVAGARVPVVLDAGIGTASDAALAMELGCDAVLLASAVTRAADPPAMAAAMAAAVTAGYLARCAGRIPKRFWAQASSPAR.

Residue K98 is the Schiff-base intermediate with DXP of the active site. 1-deoxy-D-xylulose 5-phosphate is bound by residues G159, 185–186, and 207–208; these read AG and AS.

This sequence belongs to the ThiG family. Homotetramer. Forms heterodimers with either ThiH or ThiS.

The protein resides in the cytoplasm. The catalysed reaction is [ThiS sulfur-carrier protein]-C-terminal-Gly-aminoethanethioate + 2-iminoacetate + 1-deoxy-D-xylulose 5-phosphate = [ThiS sulfur-carrier protein]-C-terminal Gly-Gly + 2-[(2R,5Z)-2-carboxy-4-methylthiazol-5(2H)-ylidene]ethyl phosphate + 2 H2O + H(+). Its pathway is cofactor biosynthesis; thiamine diphosphate biosynthesis. In terms of biological role, catalyzes the rearrangement of 1-deoxy-D-xylulose 5-phosphate (DXP) to produce the thiazole phosphate moiety of thiamine. Sulfur is provided by the thiocarboxylate moiety of the carrier protein ThiS. In vitro, sulfur can be provided by H(2)S. The polypeptide is Thiazole synthase (Mycobacterium tuberculosis (strain ATCC 25177 / H37Ra)).